We begin with the raw amino-acid sequence, 356 residues long: Na(+)/H(+) exchange regulatory cofactor NHE-RF1 (356 aa).

Ser2 is subject to N-acetylserine. Phosphoserine occurs at positions 2 and 46. In terms of domain architecture, PDZ 1 spans 14 to 94 (LCCLEKGPNG…AVRLLVVDPE (81 aa)). Positions 113–142 (AQEKSEHTEPPAAADTKKAGDQNEAEKSHL) are disordered. The PDZ 2 domain occupies 151–231 (LCTMKKGPNG…EAKLLVVDKE (81 aa)). A disordered region spans residues 265–356 (NSREALVEPA…SKKNELFSNL (92 aa)). A phosphoserine mark is found at Ser266, Ser277, Ser287, and Ser288. The span at 272–288 (EPASESPRPALARSASS) shows a compositional bias: low complexity. Phosphothreonine is present on Thr290. 2 positions are modified to phosphoserine: Ser291 and Ser299. Positions 307–317 (EPSSTSSSSDP) are enriched in low complexity. A compositionally biased stretch (basic and acidic residues) spans 346–356 (WSKKNELFSNL).

Homodimer, and heterodimer with NHERF2. Binds the N-termini of EZR, RDX and MSN. Binds the C-termini of PDGFRA, PDGFRB, ADRB2, NOS2 and CFTR. Binds ARHGAP17, EPI64, RACK1, OPRK1, GNAQ, CTNNB1 and PLCB3. Binds PDZK1. Interacts with CLCN3. Binds the C-terminus of PAG1. In resting T-cells, part of a PAG1-NHERF1-MSN complex which is disrupted upon TCR activation. Forms a complex with CFTR and SLC4A7. Forms a complex with SLC4A7 and ATP6V1B1. Interacts with TRPC4 (via the PDZ-binding domain). Directly interacts with HTR4. Interacts (via the PDZ 1 domain) with PODXL (via the C-terminal PDZ-binding motif DTHL); interaction is not detected in glomerular epithelium cells. Interacts (via the PDZ 1 domain) with PODXL (via the C-terminal PDZ-binding motif DTHL); the interaction take place early in the secretory pathway and is necessary for its apical membrane sorting. Interacts with SLC26A3. Interacts with MCC. Interacts with SLC34A1. Interacts (via the PDZ domains) with SLC26A6 isoform 4 and isoform 5. Interacts (via PDZ domains) with ACE2 (via PDZ-binding motif); the interaction may enhance ACE2 membrane residence.

It is found in the cytoplasm. It localises to the apical cell membrane. The protein resides in the cell projection. The protein localises to the filopodium. Its subcellular location is the ruffle. It is found in the microvillus. It localises to the endomembrane system. Its function is as follows. Scaffold protein that connects plasma membrane proteins with members of the ezrin/moesin/radixin family and thereby helps to link them to the actin cytoskeleton and to regulate their surface expression. Necessary for recycling of internalized ADRB2. Was first known to play a role in the regulation of the activity and subcellular location of SLC9A3. Necessary for cAMP-mediated phosphorylation and inhibition of SLC9A3. Involved in sperm capacitation. May participate in the regulation of the chloride and bicarbonate homeostasis in spermatozoa. May enhance Wnt signaling. May participate in HTR4 targeting to microvilli. Involved in the regulation of phosphate reabsorption in the renal proximal tubules. The protein is Na(+)/H(+) exchange regulatory cofactor NHE-RF1 (Nherf1) of Rattus norvegicus (Rat).